A 446-amino-acid chain; its full sequence is N-succinylarginine dihydrolase (446 aa).

Substrate is bound by residues alanine 19 to serine 28, asparagine 110, and histidine 137 to arginine 138. The active site involves glutamate 174. Arginine 213 lines the substrate pocket. Histidine 249 is a catalytic residue. Substrate contacts are provided by aspartate 251 and asparagine 364. Cysteine 370 functions as the Nucleophile in the catalytic mechanism.

It belongs to the succinylarginine dihydrolase family. Homodimer.

The enzyme catalyses N(2)-succinyl-L-arginine + 2 H2O + 2 H(+) = N(2)-succinyl-L-ornithine + 2 NH4(+) + CO2. It functions in the pathway amino-acid degradation; L-arginine degradation via AST pathway; L-glutamate and succinate from L-arginine: step 2/5. Catalyzes the hydrolysis of N(2)-succinylarginine into N(2)-succinylornithine, ammonia and CO(2). The chain is N-succinylarginine dihydrolase from Paraburkholderia xenovorans (strain LB400).